We begin with the raw amino-acid sequence, 467 residues long: Squalene synthase (467 aa).

It belongs to the phytoene/squalene synthase family. Requires Mg(2+) as cofactor.

The enzyme catalyses 2 (2E,6E)-farnesyl diphosphate + NADPH + H(+) = squalene + 2 diphosphate + NADP(+). It catalyses the reaction 2 (2E,6E)-farnesyl diphosphate + NADH + H(+) = squalene + 2 diphosphate + NAD(+). It functions in the pathway terpene metabolism; lanosterol biosynthesis; lanosterol from farnesyl diphosphate: step 1/3. In terms of biological role, squalene synthase; part of the third module of ergosterol biosynthesis pathway that includes the late steps of the pathway. The third module or late pathway involves the ergosterol synthesis itself through consecutive reactions that mainly occur in the endoplasmic reticulum (ER) membrane. Firstly, the squalene synthase SQS catalyzes the condensation of 2 farnesyl pyrophosphate moieties to form squalene, which is the precursor of all steroids. Secondly, the squalene epoxidase catalyzes the stereospecific oxidation of squalene to (S)-2,3-epoxysqualene, which is considered to be a rate-limiting enzyme in steroid biosynthesis. Then, the lanosterol synthase LS catalyzes the cyclization of (S)-2,3 oxidosqualene to lanosterol, a reaction that forms the sterol core. In the next steps, lanosterol is transformed to ergosterol via a complex process involving various demethylation, reduction and desaturation reactions. Lanosterol is also an intermediate in the biosynthesis of triterpenes such as ganoderic acids (GA), a group of highly oxygenated lanostane-type triterpenoids which are well recognized as a main group of unique bioactive compounds in the medicinal mushroom Ganoderma lucidum. This chain is Squalene synthase, found in Ganoderma lucidum (Ling zhi medicinal fungus).